Reading from the N-terminus, the 933-residue chain is Serine/threonine-protein kinase PknD (933 aa).

Residues 4–291 enclose the Protein kinase domain; that stretch reads YDIIRMIGKG…ALKADIEQHL (288 aa). Residues 10-18 and K33 each bind ATP; that span reads IGKGGMGEV. Residue D138 is the Proton acceptor of the active site.

It belongs to the protein kinase superfamily. Ser/Thr protein kinase family. In terms of processing, autophosphorylated on serine and threonine residues.

The catalysed reaction is L-seryl-[protein] + ATP = O-phospho-L-seryl-[protein] + ADP + H(+). It carries out the reaction L-threonyl-[protein] + ATP = O-phospho-L-threonyl-[protein] + ADP + H(+). Functionally, together with the serine/threonine kinase Pkn1, may play a role in the specific interactions with host proteins during intracellular growth. This chain is Serine/threonine-protein kinase PknD, found in Chlamydia abortus (strain DSM 27085 / S26/3) (Chlamydophila abortus).